The following is a 307-amino-acid chain: Ribosomal protein L11 methyltransferase (307 aa).

S-adenosyl-L-methionine contacts are provided by Thr162, Gly183, Asp205, and Asn244.

Belongs to the methyltransferase superfamily. PrmA family.

The protein resides in the cytoplasm. The enzyme catalyses L-lysyl-[protein] + 3 S-adenosyl-L-methionine = N(6),N(6),N(6)-trimethyl-L-lysyl-[protein] + 3 S-adenosyl-L-homocysteine + 3 H(+). Functionally, methylates ribosomal protein L11. The chain is Ribosomal protein L11 methyltransferase from Bordetella parapertussis (strain 12822 / ATCC BAA-587 / NCTC 13253).